A 391-amino-acid chain; its full sequence is Leucine-rich repeat-containing protein 74B (391 aa).

Residues Met-1–His-38 form a disordered region. A compositionally biased stretch (basic and acidic residues) spans Glu-28–His-38. LRR repeat units follow at residues Tyr-106 to Ala-126, Ile-134 to Cys-154, Thr-162 to Ala-182, Gly-190 to Pro-211, Gly-218 to Arg-239, Phe-246 to Asp-259, Val-274 to Gly-294, Thr-302 to Lys-323, and Ala-332 to Met-354. The disordered stretch occupies residues Lys-371–Leu-391. The segment covering Pro-374–Leu-391 has biased composition (low complexity).

The protein is Leucine-rich repeat-containing protein 74B of Mus musculus (Mouse).